Reading from the N-terminus, the 304-residue chain is Cell surface-binding protein OPG105 (304 aa).

The Alpha-carbonic anhydrase domain maps to 1 to 235; sequence MPQQLSPINI…NDDTQVYYSG (235 aa). At 1–275 the chain is on the virion surface side; the sequence is MPQQLSPINI…YQKYIEGNKT (275 aa). The chain crosses the membrane as a helical span at residues 276–294; sequence FAIIAIVFVFILTAILFLM. Residues 295–304 lie on the Intravirion side of the membrane; that stretch reads SRRYSREKQN.

The protein belongs to the alpha-carbonic anhydrase family. Homodimer; disulfide-linked. In terms of processing, apparently non-glycosylated.

The protein resides in the virion membrane. Its function is as follows. Binds to chondroitin sulfate on the cell surface to provide virion attachment to target cell. This is Cell surface-binding protein OPG105 (OPG105) from Rabbitpox virus (strain Utrecht) (RPV).